We begin with the raw amino-acid sequence, 354 residues long: Vascular endothelial growth factor D (354 aa).

The N-terminal stretch at 1–21 is a signal peptide; it reads MYREWVVVNVFMMLYVQLVQG. A propeptide spans 22–88 (or 99 (in a minor form)); the sequence is SSNEHGPVKR…SRSASHRSTR (67 aa). 3 disulfides stabilise this stretch: C111-C153, C142-C189, and C146-C191. N155 and N185 each carry an N-linked (GlcNAc...) asparagine glycan. The propeptide occupies 206–354; the sequence is SIQIPEEDRC…AQGPHSRKNP (149 aa). One copy of the 1; approximate repeat lies at 222–237; it reads CPIDMLWDSNKCKCVL. The segment at 222 to 318 is 4 X 16 AA repeats of C-X(10)-C-X-C-X(1,3)-C; that stretch reads CPIDMLWDSN…PDTCSCEDRC (97 aa). 3 repeat units span residues 258 to 273, 277 to 293, and 301 to 318. N-linked (GlcNAc...) asparagine glycosylation is present at N287.

Belongs to the PDGF/VEGF growth factor family. As to quaternary structure, homodimer; non-covalent and antiparallel. In terms of processing, undergoes a complex proteolytic maturation which generates a variety of processed secreted forms with increased activity toward VEGFR-3 and VEGFR-2. VEGF-D first form an antiparallel homodimer linked by disulfide bonds before secretion. The fully processed VEGF-D is composed mostly of two VEGF homology domains (VHDs) bound by non-covalent interactions. In terms of tissue distribution, highly expressed in lung, heart, small intestine and fetal lung, and at lower levels in skeletal muscle, colon, and pancreas.

It is found in the secreted. Its function is as follows. Growth factor active in angiogenesis, lymphangiogenesis and endothelial cell growth, stimulating their proliferation and migration and also has effects on the permeability of blood vessels. May function in the formation of the venous and lymphatic vascular systems during embryogenesis, and also in the maintenance of differentiated lymphatic endothelium in adults. Binds and activates VEGFR-2 (KDR/FLK1) and VEGFR-3 (FLT4) receptors. This Homo sapiens (Human) protein is Vascular endothelial growth factor D.